A 543-amino-acid chain; its full sequence is MEQSCEEEKEPEPQKNIQETKQVDDEDAELIFVGVEHVNEDAELIFVGVTSNSKPVVSNILNRVTPGSWSRRKKYDHLRKDTARKLQPKSHETVTSEAVTVLPASQLESRSTDSPIIIEPLSKPDYRNSSPQVVPNNSSELPSPLITFTDSLHHPVSTALSVGGINESPRVSKQLSTFEVNSINPKRAKLRDGIIEGNSSASFPSDTFHTMNTQQSTPSNNVHTSLSHVQNGAPFPAAFPKDNIHFKPINTNLDRANELAKTDILSLTSQNKTFDPKKENPIVLLSDFYYGQHKGEGQPEQKTHTTFKCLSCVKVLKNVKFMNHVKHHLEFEKQRNDSWENHTTCQHCHRQFPTPFQLQCHIENVHTAQEPSTVCKICELSFETDQVLLQHMKDHHKPGEMPYVCQVCHYRSSVFADVETHFRTCHENTKNLLCPFCLKIFKTATPYMCHYRGHWGKSAHQCSKCRLQFLTFKEKMEHKTQCHQMFKKPKQLEGLPPETKVTIQVSLEPLQPGSVDVASITVSTSDSEPSLPRSKSKISKKSH.

Residue Met-1 is modified to N-acetylmethionine. The span at 1-10 (MEQSCEEEKE) shows a compositional bias: acidic residues. The tract at residues 1–23 (MEQSCEEEKEPEPQKNIQETKQV) is disordered. 2 positions are modified to phosphoserine: Ser-68 and Ser-70. Residues 105–138 (SQLESRSTDSPIIIEPLSKPDYRNSSPQVVPNNS) form a disordered region. Residues 128 to 138 (NSSPQVVPNNS) show a composition bias toward low complexity. Residues Lys-173, Lys-247, and Lys-261 each participate in a glycyl lysine isopeptide (Lys-Gly) (interchain with G-Cter in SUMO2) cross-link. 4 C2H2-type zinc fingers span residues 343-366 (TTCQHCHRQFPTPFQLQCHIENVH), 373-396 (TVCKICELSFETDQVLLQHMKDHH), 432-454 (LLCPFCLKIFKTATPYMCHYRGH), and 460-483 (HQCSKCRLQFLTFKEKMEHKTQCH). Residues 518-543 (ASITVSTSDSEPSLPRSKSKISKKSH) form a disordered region. Positions 534–543 (SKSKISKKSH) are enriched in basic residues.

The protein resides in the nucleus. Functionally, may function as a transcription factor. This chain is Zinc finger protein 280B (ZNF280B), found in Homo sapiens (Human).